We begin with the raw amino-acid sequence, 106 residues long: Large ribosomal subunit protein uL24 (106 aa).

It belongs to the universal ribosomal protein uL24 family. In terms of assembly, part of the 50S ribosomal subunit.

Its function is as follows. One of two assembly initiator proteins, it binds directly to the 5'-end of the 23S rRNA, where it nucleates assembly of the 50S subunit. In terms of biological role, one of the proteins that surrounds the polypeptide exit tunnel on the outside of the subunit. This is Large ribosomal subunit protein uL24 from Rhodospirillum rubrum (strain ATCC 11170 / ATH 1.1.1 / DSM 467 / LMG 4362 / NCIMB 8255 / S1).